A 332-amino-acid chain; its full sequence is L-lactate dehydrogenase A chain (332 aa).

Residues 29–57 (GMVG…MEDK) and Arg99 contribute to the NAD(+) site. Substrate is bound by residues Arg106, Asn138, and Arg169. An NAD(+)-binding site is contributed by Asn138. The active-site Proton acceptor is His193. Residue Thr248 coordinates substrate.

It belongs to the LDH/MDH superfamily. LDH family. In terms of assembly, homotetramer.

Its subcellular location is the cytoplasm. The enzyme catalyses (S)-lactate + NAD(+) = pyruvate + NADH + H(+). Its pathway is fermentation; pyruvate fermentation to lactate; (S)-lactate from pyruvate: step 1/1. Its function is as follows. Interconverts simultaneously and stereospecifically pyruvate and lactate with concomitant interconversion of NADH and NAD(+). This chain is L-lactate dehydrogenase A chain (ldha), found in Sphyraena argentea (Pacific barracuda).